Here is a 163-residue protein sequence, read N- to C-terminus: Troponin C, skeletal muscle (163 aa).

Ala2 bears the Blocked amino end (Ala) mark. EF-hand domains follow at residues Glu18–Asn53, Pro54–Glu89, Lys94–His129, and Val130–Gln163. Ca(2+) is bound by residues Asp31, Asp33, Asp37, Glu42, Asp67, Asp69, Ser71, Thr73, Glu78, Asp107, Asn109, Asp111, Glu118, Asp143, Asn145, Asp147, Arg149, and Glu154.

The protein belongs to the troponin C family.

In terms of biological role, troponin is the central regulatory protein of striated muscle contraction. Tn consists of three components: Tn-I which is the inhibitor of actomyosin ATPase, Tn-T which contains the binding site for tropomyosin and Tn-C. The binding of calcium to Tn-C abolishes the inhibitory action of Tn on actin filaments. This is Troponin C, skeletal muscle (TNNC2) from Gallus gallus (Chicken).